Here is a 926-residue protein sequence, read N- to C-terminus: MSLPNAFVTLLTTSSYLPGALVLLHALHDLHPAPRDFQIVALVTPETVDAATIGELRRAGYDLVIGVEPIGSGKAGQVGLELMGRPDLNFALTKLHLFRLAPFFSTLIYLDADILPLRPISHLFTSTAPHVFSACPDTGWPDCFNSGFMVIRPRESDWDGLKGMLKDGEGEDGLYREAGNGSFDGADQGLLNEWFSEDGGGGDWNRLSFTYNVTPSAAYTWAPAYKRFGHKISNVHFIGPNKPWTSLPGRPAGVSNVKGKENSYDYLSLIDRWFAVYDKHVRPASALDPDISRRFAVPQTIAAWDSHANQARAAATVLPEDKLDLSELKAATERGVNAFKPGQYTSLPLEGRVDLIMPKPKAIPRAPISQLVASSTIAPSVSPSALTPPPADAAPAPAPAPVPTQTEQKTAQPSVWDAQRSSPPASAPPEMSVPHAYYHNAWEAPLSQQSSYYAHPESHRPATEHKEPEYPTLPKEVTGDSWYARFATSTPDKRAISAVFPWEEKSYGPGYGHGSRPKPERVFPKGEEPLPSLVQQLIHPLQPPSISIQNPTPPHPAHSQHQSHATGMGMAGQAPKSPSPPPRHVSMVEAMASYKNVWDDIPQIGRYVDIMSGKTGGKSVRGVSTRGHGHGHGHIQGHGQGQKQPQAQTHERNTSLHSLQSVPGTPRTQYSTFGKSPRLTNARNLERRESFEQPEDSADGDDENSTSASEEEGGKSREGNSSKPYKGNKKYKDRWAQTDRVKTVDETVQTQTHAGEEAAAGGLKMWGLPHASAHGRKSSKEIPFPIGSGNGRAGGGGQREAQTQHQSTYYEYQQQHPHSQQSRQGSMASPKPELNVRLPDYSFDFKGATSHAQGLAQAQAQAHGQPQGQGANPNLNAQHRHRPSGSFSTIYGGRGRVWDPNTDVEVRRRDSQEVLARFMQGSLGRG.

UDP contacts are provided by Leu10, Thr12, Tyr16, and Arg85. Positions 10, 12, 16, 85, 94, 111, 112, 113, 145, 146, 184, 187, and 188 each coordinate UDP-alpha-D-glucose. UDP-binding residues include Asp111, Ala112, and Asp113. Residue Asp111 participates in Mn(2+) binding. Residue Asp113 participates in Mn(2+) binding. Tyr219 carries O-linked (Glc...) tyrosine glycosylation. Positions 236, 239, and 242 each coordinate UDP. Residue His236 coordinates Mn(2+). UDP-alpha-D-glucose is bound by residues Gly239 and Lys242. Disordered regions lie at residues 379 to 432 (PSVS…PEMS), 452 to 476 (YYAH…LPKE), 547 to 584 (SIQN…PPRH), 611 to 749 (MSGK…ETVQ), and 768 to 903 (LPHA…PNTD). The segment covering 386-402 (LTPPPADAAPAPAPAPV) has biased composition (pro residues). Positions 404 to 413 (TQTEQKTAQP) are enriched in polar residues. Basic and acidic residues predominate over residues 456-469 (PESHRPATEHKEPE). A compositionally biased stretch (low complexity) spans 557-566 (AHSQHQSHAT). The span at 655-683 (SLHSLQSVPGTPRTQYSTFGKSPRLTNAR) shows a compositional bias: polar residues. The span at 692 to 704 (EQPEDSADGDDEN) shows a compositional bias: acidic residues. A compositionally biased stretch (basic and acidic residues) spans 733–745 (DRWAQTDRVKTVD). A compositionally biased stretch (gly residues) spans 788–798 (SGNGRAGGGGQ). Residues 800–812 (EAQTQHQSTYYEY) are compositionally biased toward polar residues. 2 stretches are compositionally biased toward low complexity: residues 813 to 824 (QQQHPHSQQSRQ) and 851 to 875 (HAQG…NPNL).

It belongs to the glycosyltransferase 8 family. Glycogenin subfamily. It depends on Mn(2+) as a cofactor.

Its subcellular location is the cytoplasm. It localises to the vacuole. The enzyme catalyses L-tyrosyl-[glycogenin] + UDP-alpha-D-glucose = alpha-D-glucosyl-L-tyrosyl-[glycogenin] + UDP + H(+). The catalysed reaction is [1,4-alpha-D-glucosyl](n)-L-tyrosyl-[glycogenin] + UDP-alpha-D-glucose = [1,4-alpha-D-glucosyl](n+1)-L-tyrosyl-[glycogenin] + UDP + H(+). Its function is as follows. Self-glucosylating initiator of glycogen synthesis. It catalyzes the formation of a short alpha (1,4)-glucosyl chain covalently attached via a glucose 1-O-tyrosyl linkage to internal tyrosine residues and these chains act as primers for the elongation reaction catalyzed by glycogen synthase. This is Glycogenin from Cryptococcus neoformans var. grubii serotype A (strain H99 / ATCC 208821 / CBS 10515 / FGSC 9487) (Filobasidiella neoformans var. grubii).